The primary structure comprises 150 residues: Large ribosomal subunit protein bL9 (150 aa).

It belongs to the bacterial ribosomal protein bL9 family.

Its function is as follows. Binds to the 23S rRNA. The chain is Large ribosomal subunit protein bL9 from Neisseria meningitidis serogroup A / serotype 4A (strain DSM 15465 / Z2491).